A 230-amino-acid polypeptide reads, in one-letter code: Probable phosphatase IndB (230 aa).

The active-site Nucleophile is aspartate 8. Residues aspartate 8, aspartate 10, and aspartate 169 each contribute to the Mg(2+) site. Catalysis depends on aspartate 10, which acts as the Proton donor.

It belongs to the HAD-like hydrolase superfamily. Mg(2+) is required as a cofactor.

Its function is as follows. Part of an operon that could be involved in the biosynthesis of the blue pigment indigoidine, which is implicated in pathogenicity and protection from oxidative stress. The protein is Probable phosphatase IndB of Dickeya dadantii (strain 3937) (Erwinia chrysanthemi (strain 3937)).